The following is a 261-amino-acid chain: MPSMTSKVFAITGGASGIGAATCRLLAERGAAVICLADVSSTNFTSLQESIAKSNPSTLVHCTELDVRSADKVDQWLQSIVSTHGDLHGAANVAGIAQGAGLRATPTILEENDAEWSRILDVNLNGVFYSTRAQVRVMKDLPPGHRSIVNVASIAAFSHVPDVYAYGTSKSACAYLTTCIAADVFWSGIRVNCVSPGITNTPMLPQFEPKAKSLDEIKDMYRDQGYPTGEADGVARTIVWLLSEDSIPVYGANINVGACPP.

The N-terminal stretch at 1–20 (MPSMTSKVFAITGGASGIGA) is a signal peptide. Residue Ile-18 coordinates NADP(+). Asn-43 carries an N-linked (GlcNAc...) asparagine glycan. NADP(+)-binding residues include Asp-66, Arg-132, Tyr-166, Lys-170, and Thr-201. Residue Tyr-166 is the Proton donor of the active site. The active-site Lowers pKa of active site Tyr is Lys-170.

The protein belongs to the short-chain dehydrogenases/reductases (SDR) family. As to quaternary structure, homotetramer.

The enzyme catalyses chanoclavine-I + NAD(+) = chanoclavine-I aldehyde + NADH + H(+). It functions in the pathway alkaloid biosynthesis; ergot alkaloid biosynthesis. Its function is as follows. Chanoclavine-I dehydrogenase; part of the gene cluster that mediates the biosynthesis of fungal ergot alkaloid. DmaW catalyzes the first step of ergot alkaloid biosynthesis by condensing dimethylallyl diphosphate (DMAP) and tryptophan to form 4-dimethylallyl-L-tryptophan. The second step is catalyzed by the methyltransferase easF that methylates 4-dimethylallyl-L-tryptophan in the presence of S-adenosyl-L-methionine, resulting in the formation of 4-dimethylallyl-L-abrine. The catalase easC and the FAD-dependent oxidoreductase easE then transform 4-dimethylallyl-L-abrine to chanoclavine-I which is further oxidized by easD in the presence of NAD(+), resulting in the formation of chanoclavine-I aldehyde. Agroclavine dehydrogenase easG then mediates the conversion of chanoclavine-I aldehyde to agroclavine via a non-enzymatic adduct reaction: the substrate is an iminium intermediate that is formed spontaneously from chanoclavine-I aldehyde in the presence of glutathione. The presence of easA is not required to complete this reaction. Further conversion of agroclavine to paspalic acid is a two-step process involving oxidation of agroclavine to elymoclavine and of elymoclavine to paspalic acid, the second step being performed by the elymoclavine oxidase cloA. Paspalic acid is then further converted to D-lysergic acid. Ergopeptines are assembled from D-lysergic acid and three different amino acids by the D-lysergyl-peptide-synthetases composed each of a monomudular and a trimodular nonribosomal peptide synthetase subunit. LpsB and lpsC encode the monomodular subunits responsible for D-lysergic acid activation and incorporation into the ergopeptine backbone. LpsA1 and A2 subunits encode the trimodular nonribosomal peptide synthetase assembling the tripeptide portion of ergopeptines. LpsA1 is responsible for formation of the major ergopeptine, ergotamine, and lpsA2 for alpha-ergocryptine, the minor ergopeptine of the total alkaloid mixture elaborated by C.purpurea. D-lysergyl-tripeptides are assembled by the nonribosomal peptide synthetases and released as N-(D-lysergyl-aminoacyl)-lactams. Cyclolization of the D-lysergyl-tripeptides is performed by the Fe(2+)/2-ketoglutarate-dependent dioxygenase easH which introduces a hydroxyl group into N-(D-lysergyl-aminoacyl)-lactam at alpha-C of the aminoacyl residue followed by spontaneous condensation with the terminal lactam carbonyl group. This Claviceps purpurea (strain 20.1) (Ergot fungus) protein is Chanoclavine-I dehydrogenase easD.